The following is a 466-amino-acid chain: Ribulose bisphosphate carboxylase large chain (466 aa).

Lysine 5 is modified (N6,N6,N6-trimethyllysine). Substrate contacts are provided by asparagine 114 and threonine 164. The active-site Proton acceptor is lysine 166. Position 168 (lysine 168) interacts with substrate. The Mg(2+) site is built by lysine 192, aspartate 194, and glutamate 195. An N6-carboxylysine modification is found at lysine 192. Catalysis depends on histidine 285, which acts as the Proton acceptor. Substrate is bound by residues arginine 286, histidine 318, and serine 370.

The protein belongs to the RuBisCO large chain family. Type I subfamily. In terms of assembly, heterohexadecamer of 8 large chains and 8 small chains; disulfide-linked. The disulfide link is formed within the large subunit homodimers. Requires Mg(2+) as cofactor. In terms of processing, the disulfide bond which can form in the large chain dimeric partners within the hexadecamer appears to be associated with oxidative stress and protein turnover.

It localises to the plastid. The protein localises to the chloroplast. It catalyses the reaction 2 (2R)-3-phosphoglycerate + 2 H(+) = D-ribulose 1,5-bisphosphate + CO2 + H2O. The enzyme catalyses D-ribulose 1,5-bisphosphate + O2 = 2-phosphoglycolate + (2R)-3-phosphoglycerate + 2 H(+). RuBisCO catalyzes two reactions: the carboxylation of D-ribulose 1,5-bisphosphate, the primary event in carbon dioxide fixation, as well as the oxidative fragmentation of the pentose substrate in the photorespiration process. Both reactions occur simultaneously and in competition at the same active site. This Asarum canadense (Wild ginger) protein is Ribulose bisphosphate carboxylase large chain.